The chain runs to 91 residues: Small ribosomal subunit protein uS19 (91 aa).

The disordered stretch occupies residues 72-91 (GEFSPTRKFGGHGDDKKKKK). Residues 82 to 91 (GHGDDKKKKK) show a composition bias toward basic and acidic residues.

Belongs to the universal ribosomal protein uS19 family.

Protein S19 forms a complex with S13 that binds strongly to the 16S ribosomal RNA. This chain is Small ribosomal subunit protein uS19, found in Spiroplasma kunkelii.